The chain runs to 321 residues: Cytochrome c biogenesis protein CcsA (321 aa).

Transmembrane regions (helical) follow at residues His12 to Tyr32, Met45 to Ser62, Leu71 to Ile91, Leu98 to Leu117, Met143 to Ile163, Val227 to Asn247, Glu260 to Arg277, and Val292 to Ile312.

This sequence belongs to the CcmF/CycK/Ccl1/NrfE/CcsA family. In terms of assembly, may interact with Ccs1.

The protein localises to the plastid. The protein resides in the chloroplast thylakoid membrane. Its function is as follows. Required during biogenesis of c-type cytochromes (cytochrome c6 and cytochrome f) at the step of heme attachment. The sequence is that of Cytochrome c biogenesis protein CcsA from Phalaenopsis aphrodite subsp. formosana (Moth orchid).